Here is a 27-residue protein sequence, read N- to C-terminus: Morintide mO5 (27 aa).

The region spanning 1 to 27 (NGLCCSQYGFCGTTSQYCSRANGCQSN) is the Chitin-binding type-1 domain. A disulfide bond links Cys-4 and Cys-18.

As to expression, seeds (at protein level).

Its function is as follows. Chitin-binding protein which functions in defense against chitin-containing fungal pathogens. This Moringa oleifera (Horseradish tree) protein is Morintide mO5.